The following is a 297-amino-acid chain: Acetyl-coenzyme A carboxylase carboxyl transferase subunit beta (297 aa).

Positions leucine 27 to valine 296 constitute a CoA carboxyltransferase N-terminal domain. The Zn(2+) site is built by cysteine 31, cysteine 34, cysteine 50, and cysteine 53. The C4-type zinc finger occupies cysteine 31–cysteine 53.

The protein belongs to the AccD/PCCB family. Acetyl-CoA carboxylase is a heterohexamer composed of biotin carboxyl carrier protein (AccB), biotin carboxylase (AccC) and two subunits each of ACCase subunit alpha (AccA) and ACCase subunit beta (AccD). Zn(2+) serves as cofactor.

Its subcellular location is the cytoplasm. It carries out the reaction N(6)-carboxybiotinyl-L-lysyl-[protein] + acetyl-CoA = N(6)-biotinyl-L-lysyl-[protein] + malonyl-CoA. Its pathway is lipid metabolism; malonyl-CoA biosynthesis; malonyl-CoA from acetyl-CoA: step 1/1. Component of the acetyl coenzyme A carboxylase (ACC) complex. Biotin carboxylase (BC) catalyzes the carboxylation of biotin on its carrier protein (BCCP) and then the CO(2) group is transferred by the transcarboxylase to acetyl-CoA to form malonyl-CoA. In Pseudomonas entomophila (strain L48), this protein is Acetyl-coenzyme A carboxylase carboxyl transferase subunit beta.